The primary structure comprises 165 residues: Thiol peroxidase (165 aa).

The Thioredoxin domain occupies proline 18–alanine 165. Cysteine 60 serves as the catalytic Cysteine sulfenic acid (-SOH) intermediate. Cysteine 60 and cysteine 93 are oxidised to a cystine.

It belongs to the peroxiredoxin family. Tpx subfamily. In terms of assembly, homodimer.

The enzyme catalyses a hydroperoxide + [thioredoxin]-dithiol = an alcohol + [thioredoxin]-disulfide + H2O. Thiol-specific peroxidase that catalyzes the reduction of hydrogen peroxide and organic hydroperoxides to water and alcohols, respectively. Plays a role in cell protection against oxidative stress by detoxifying peroxides. This chain is Thiol peroxidase, found in Mycobacterium bovis (strain ATCC BAA-935 / AF2122/97).